A 34-amino-acid polypeptide reads, in one-letter code: Photosystem II reaction center protein T (34 aa).

The helical transmembrane segment at 3–23 (ALVYTFLLVSTLGIIFFAIFF) threads the bilayer.

Belongs to the PsbT family. PSII is composed of 1 copy each of membrane proteins PsbA, PsbB, PsbC, PsbD, PsbE, PsbF, PsbH, PsbI, PsbJ, PsbK, PsbL, PsbM, PsbT, PsbY, PsbZ, Psb30/Ycf12, at least 3 peripheral proteins of the oxygen-evolving complex and a large number of cofactors. It forms dimeric complexes.

Its subcellular location is the plastid. The protein resides in the chloroplast thylakoid membrane. Found at the monomer-monomer interface of the photosystem II (PS II) dimer, plays a role in assembly and dimerization of PSII. PSII is a light-driven water plastoquinone oxidoreductase, using light energy to abstract electrons from H(2)O, generating a proton gradient subsequently used for ATP formation. This chain is Photosystem II reaction center protein T, found in Solanum lycopersicum (Tomato).